Consider the following 354-residue polypeptide: Rhodopsin (354 aa).

The Extracellular portion of the chain corresponds to 1–36 (MNGTEGPYFYIPMLNTTGVVRSPYEYPQYYLVNPAA). Asn-2 and Asn-15 each carry an N-linked (GlcNAc...) asparagine glycan. The chain crosses the membrane as a helical span at residues 37-61 (YAVLGAYMFFLILVGFPINFLTLYV). Residues 62–73 (TIEHKKLRTPLN) are Cytoplasmic-facing. The chain crosses the membrane as a helical span at residues 74–96 (YILLNLAVADLFMVFGGFTTTIY). The Extracellular portion of the chain corresponds to 97 to 110 (TSMHGYFVLGRLGC). An intrachain disulfide couples Cys-110 to Cys-187. Residues 111–133 (NVEGFSATLGGEIALWSLVVLAI) traverse the membrane as a helical segment. The 'Ionic lock' involved in activated form stabilization motif lies at 134–136 (ERW). At 134–152 (ERWVVVCKPISNFRFGENH) the chain is on the cytoplasmic side. The helical transmembrane segment at 153–173 (AIMGVAFTWFMAAACAVPPLF) threads the bilayer. Topologically, residues 174 to 202 (GWSRYIPEGMQCSCGIDYYTRAEGFNNES) are extracellular. N-linked (GlcNAc...) asparagine glycosylation occurs at Asn-200. A helical membrane pass occupies residues 203 to 224 (FVIYMFTCHFCIPLMVVFFCYG). The Cytoplasmic portion of the chain corresponds to 225–252 (RLVCAVKEAAAAQQESETTQRAEREVTR). The chain crosses the membrane as a helical span at residues 253-274 (MVIIMVVSFLVSWVPYASVAWY). The Extracellular segment spans residues 275 to 286 (IFTHQGSEFGPL). Residues 287 to 308 (FMTIPAFFAKSSSIYNPMIYIC) traverse the membrane as a helical segment. Lys-296 bears the N6-(retinylidene)lysine mark. The Cytoplasmic segment spans residues 309 to 354 (MNKQFRHCMITTLCCGKNPFEEEEGASSTASKTEASSVSSSSVSPA). Residues Cys-322 and Cys-323 are each lipidated (S-palmitoyl cysteine). The disordered stretch occupies residues 329-354 (EEEEGASSTASKTEASSVSSSSVSPA). Residues 334–354 (ASSTASKTEASSVSSSSVSPA) are compositionally biased toward low complexity.

Belongs to the G-protein coupled receptor 1 family. Opsin subfamily. In terms of processing, phosphorylated on some or all of the serine and threonine residues present in the C-terminal region. Contains one covalently linked retinal chromophore.

The protein resides in the membrane. It localises to the cell projection. It is found in the cilium. The protein localises to the photoreceptor outer segment. Functionally, photoreceptor required for image-forming vision at low light intensity. While most salt water fish species use retinal as chromophore, most freshwater fish use 3-dehydroretinal, or a mixture of retinal and 3-dehydroretinal. Light-induced isomerization of 11-cis to all-trans retinal triggers a conformational change that activates signaling via G-proteins. Subsequent receptor phosphorylation mediates displacement of the bound G-protein alpha subunit by arrestin and terminates signaling. The polypeptide is Rhodopsin (rho) (Atherina boyeri (Big-scale sand smelt)).